The following is a 176-amino-acid chain: Large ribosomal subunit protein uL22 (176 aa).

Residues 113–176 are disordered; sequence VVESRPSKDQ…ETSEAKGGSD (64 aa). Over residues 136 to 152 the composition is skewed to low complexity; that stretch reads SKAAATAPAKKSSASKA. Residues 159 to 176 show a composition bias toward basic and acidic residues; sequence TKAESKTSETSEAKGGSD.

It belongs to the universal ribosomal protein uL22 family. As to quaternary structure, part of the 50S ribosomal subunit.

Its function is as follows. This protein binds specifically to 23S rRNA; its binding is stimulated by other ribosomal proteins, e.g. L4, L17, and L20. It is important during the early stages of 50S assembly. It makes multiple contacts with different domains of the 23S rRNA in the assembled 50S subunit and ribosome. Functionally, the globular domain of the protein is located near the polypeptide exit tunnel on the outside of the subunit, while an extended beta-hairpin is found that lines the wall of the exit tunnel in the center of the 70S ribosome. The sequence is that of Large ribosomal subunit protein uL22 from Mycobacterium marinum (strain ATCC BAA-535 / M).